Consider the following 385-residue polypeptide: Heat-inducible transcription repressor HrcA (385 aa).

It belongs to the HrcA family.

In terms of biological role, negative regulator of class I heat shock genes (grpE-dnaK-dnaJ and groELS operons). Prevents heat-shock induction of these operons. The chain is Heat-inducible transcription repressor HrcA from Protochlamydia amoebophila (strain UWE25).